The primary structure comprises 329 residues: Acetyl-coenzyme A carboxylase carboxyl transferase subunit alpha (329 aa).

Positions 40 to 294 constitute a CoA carboxyltransferase C-terminal domain; it reads QLETLAARRR…KNALEKHLSE (255 aa).

This sequence belongs to the AccA family. Acetyl-CoA carboxylase is a heterohexamer composed of biotin carboxyl carrier protein (AccB), biotin carboxylase (AccC) and two subunits each of ACCase subunit alpha (AccA) and ACCase subunit beta (AccD).

It is found in the cytoplasm. It carries out the reaction N(6)-carboxybiotinyl-L-lysyl-[protein] + acetyl-CoA = N(6)-biotinyl-L-lysyl-[protein] + malonyl-CoA. It participates in lipid metabolism; malonyl-CoA biosynthesis; malonyl-CoA from acetyl-CoA: step 1/1. Component of the acetyl coenzyme A carboxylase (ACC) complex. First, biotin carboxylase catalyzes the carboxylation of biotin on its carrier protein (BCCP) and then the CO(2) group is transferred by the carboxyltransferase to acetyl-CoA to form malonyl-CoA. This chain is Acetyl-coenzyme A carboxylase carboxyl transferase subunit alpha, found in Prochlorococcus marinus (strain NATL2A).